A 434-amino-acid chain; its full sequence is Probable phosphoglucosamine mutase (434 aa).

Ser-91 acts as the Phosphoserine intermediate in catalysis. Positions 91, 229, 231, and 233 each coordinate Mg(2+). The residue at position 91 (Ser-91) is a Phosphoserine.

It belongs to the phosphohexose mutase family. Requires Mg(2+) as cofactor. Activated by phosphorylation.

It catalyses the reaction alpha-D-glucosamine 1-phosphate = D-glucosamine 6-phosphate. Catalyzes the conversion of glucosamine-6-phosphate to glucosamine-1-phosphate. The sequence is that of Probable phosphoglucosamine mutase from Methanosarcina acetivorans (strain ATCC 35395 / DSM 2834 / JCM 12185 / C2A).